A 424-amino-acid polypeptide reads, in one-letter code: Enolase (424 aa).

Gln-162 contributes to the (2R)-2-phosphoglycerate binding site. Glu-204 functions as the Proton donor in the catalytic mechanism. Mg(2+)-binding residues include Asp-241, Glu-284, and Asp-311. Lys-336, Arg-365, Ser-366, and Lys-387 together coordinate (2R)-2-phosphoglycerate. Lys-336 serves as the catalytic Proton acceptor.

Belongs to the enolase family. It depends on Mg(2+) as a cofactor.

The protein resides in the cytoplasm. It is found in the secreted. It localises to the cell surface. The enzyme catalyses (2R)-2-phosphoglycerate = phosphoenolpyruvate + H2O. The protein operates within carbohydrate degradation; glycolysis; pyruvate from D-glyceraldehyde 3-phosphate: step 4/5. Its function is as follows. Catalyzes the reversible conversion of 2-phosphoglycerate (2-PG) into phosphoenolpyruvate (PEP). It is essential for the degradation of carbohydrates via glycolysis. The chain is Enolase from Maricaulis maris (strain MCS10) (Caulobacter maris).